Reading from the N-terminus, the 179-residue chain is Segregation and condensation protein B (179 aa).

This sequence belongs to the ScpB family. Homodimer. Homodimerization may be required to stabilize the binding of ScpA to the Smc head domains. Component of a cohesin-like complex composed of ScpA, ScpB and the Smc homodimer, in which ScpA and ScpB bind to the head domain of Smc. The presence of the three proteins is required for the association of the complex with DNA.

It is found in the cytoplasm. Functionally, participates in chromosomal partition during cell division. May act via the formation of a condensin-like complex containing Smc and ScpA that pull DNA away from mid-cell into both cell halves. The chain is Segregation and condensation protein B from Clostridioides difficile (strain 630) (Peptoclostridium difficile).